The chain runs to 448 residues: Potassium/proton antiporter CemA (448 aa).

Transmembrane regions (helical) follow at residues 47–67 (IVFY…LSLL), 213–233 (LSSL…STLF), 314–334 (IISH…LFVA), and 395–415 (IISC…KYLI).

The protein belongs to the CemA family.

It is found in the plastid membrane. It catalyses the reaction K(+)(in) + H(+)(out) = K(+)(out) + H(+)(in). Its function is as follows. May be involved in proton extrusion. The polypeptide is Potassium/proton antiporter CemA (Aneura mirabilis (Parasitic liverwort)).